The sequence spans 313 residues: Aspartate carbamoyltransferase catalytic subunit (313 aa).

Arg58 and Thr59 together coordinate carbamoyl phosphate. Lys86 contributes to the L-aspartate binding site. Positions 108, 136, and 139 each coordinate carbamoyl phosphate. Arg169 and Arg223 together coordinate L-aspartate. Residues Gly264 and Pro265 each coordinate carbamoyl phosphate.

Belongs to the aspartate/ornithine carbamoyltransferase superfamily. ATCase family. Heterododecamer (2C3:3R2) of six catalytic PyrB chains organized as two trimers (C3), and six regulatory PyrI chains organized as three dimers (R2).

It carries out the reaction carbamoyl phosphate + L-aspartate = N-carbamoyl-L-aspartate + phosphate + H(+). It participates in pyrimidine metabolism; UMP biosynthesis via de novo pathway; (S)-dihydroorotate from bicarbonate: step 2/3. In terms of biological role, catalyzes the condensation of carbamoyl phosphate and aspartate to form carbamoyl aspartate and inorganic phosphate, the committed step in the de novo pyrimidine nucleotide biosynthesis pathway. This Syntrophotalea carbinolica (strain DSM 2380 / NBRC 103641 / GraBd1) (Pelobacter carbinolicus) protein is Aspartate carbamoyltransferase catalytic subunit.